Here is a 248-residue protein sequence, read N- to C-terminus: Protein maestro (248 aa).

The interval 1-23 (MEQTRKIPNQPLPTPTSQSKKRR) is disordered. The HEAT repeat unit spans residues 128–163 (SFFIDITLQARTLLDDEDDSVRYSAFVLFGQLASFA).

As to expression, prominent expression seen in testis, brain, liver and heart. Weakly expressed in the kidney.

The protein localises to the nucleus. The protein resides in the nucleolus. The chain is Protein maestro (Mro) from Mus musculus (Mouse).